Here is a 362-residue protein sequence, read N- to C-terminus: Chorismate synthase (362 aa).

Arg47 contributes to the NADP(+) binding site. FMN contacts are provided by residues 124–126 (RSS), Gly286, 301–305 (KPTAT), and Arg327.

The protein belongs to the chorismate synthase family. As to quaternary structure, homotetramer. Requires FMNH2 as cofactor.

The catalysed reaction is 5-O-(1-carboxyvinyl)-3-phosphoshikimate = chorismate + phosphate. It functions in the pathway metabolic intermediate biosynthesis; chorismate biosynthesis; chorismate from D-erythrose 4-phosphate and phosphoenolpyruvate: step 7/7. In terms of biological role, catalyzes the anti-1,4-elimination of the C-3 phosphate and the C-6 proR hydrogen from 5-enolpyruvylshikimate-3-phosphate (EPSP) to yield chorismate, which is the branch point compound that serves as the starting substrate for the three terminal pathways of aromatic amino acid biosynthesis. This reaction introduces a second double bond into the aromatic ring system. This chain is Chorismate synthase, found in Rippkaea orientalis (strain PCC 8801 / RF-1) (Cyanothece sp. (strain PCC 8801)).